The chain runs to 503 residues: NAD-dependent protein deacetylase HST1 (503 aa).

The region spanning 183-468 (RLPNFNTIDH…SLVAKKCHWD (286 aa)) is the Deacetylase sirtuin-type domain. Residues 208 to 227 (GAGV…EGFY) and 290 to 293 (QNID) contribute to the NAD(+) site. H310 functions as the Proton acceptor in the catalytic mechanism. Residues C318, C321, C342, and C345 each contribute to the Zn(2+) site. Residues 412–414 (GTS), 437–439 (NRD), and C454 contribute to the NAD(+) site.

The protein belongs to the sirtuin family. Class I subfamily. In terms of assembly, identified in the Set3C complex with HOS2, SIF2, SNT1, CPR1, HOS4/YIL112W and SET3. Its presence is however not essential for meiotic repression by the Set3C complex. Interacts with SUM1 and RFM1. The interaction with SUM1 is mediated by RFM1. The cofactor is Zn(2+).

The protein resides in the nucleus. The enzyme catalyses N(6)-acetyl-L-lysyl-[protein] + NAD(+) + H2O = 2''-O-acetyl-ADP-D-ribose + nicotinamide + L-lysyl-[protein]. In terms of biological role, NAD-dependent histone deacetylase involved in telomeric silencing. Histone deacetylase proteins act via the formation of large multiprotein complexes that are responsible for the deacetylation of lysine residues on the N-terminal part of the core histones (H2A, H2B, H3 and H4). Histone deacetylation gives a tag for epigenetic repression and plays an important role in transcriptional regulation, cell cycle progression and developmental events. Restores silencing at HMR in SIR2 mutants when overexpressed. Required to repress middle sporulation genes during vegetative growth. Acts as a sensor of NAD(+) levels and regulator of NAD(+) biosynthesis. Regulates the gene expression of de novo NAD(+) biosynthesis genes. This is NAD-dependent protein deacetylase HST1 (HST1) from Saccharomyces cerevisiae (strain ATCC 204508 / S288c) (Baker's yeast).